A 983-amino-acid chain; its full sequence is MKNLFNFFKTSSELRLAYRLLKQINQKRSFYGAMTDFDLANQTNIFKKRLANGEKLKDIRVDAFAVAREATKRILGKTPYDVQILGGLILDMGSVAEMKTGEGKTIASIPPVYLNALLGQGVIVSTVNEYLAERDAEDNGKVYNFLGLTVGINKTEMDANTKRMMYNADITYSVHSELGFDYLRDNMVFSAAEKVQRGLNFCLIDEVDSILIDEAKTPLIISGGKTNLPAQYLSANQFVNTLIAEDFYIDEETKGIKLNDKGIDKANAFFGLRNLYEIQNSEIVHRIQNALRANKVMKRDVEYIVQDGKIALVDQFTGRIMAGRSYSEGLQQALQAKEGLEIEPETKTLATITYQNFFRLFKKLSGMTGTAKTEEQEFIDVYNMRVNVIPTNKPMIRKDEKDEIFATSHEKNQAIISEVERVHKMGQPILIGTSQVVDSETLSEMLNQKGLYHTVLNAKQNQLEAEIIAKAGRKNAITIATNMAGRGTDIILEPGVTELGGLYILGTDKAEARRIDNQLRGRSGRQGDVGISRFFISLQDQLFRRFTNFDQIFGAYGQTNGAIKGKYIHAVLLAAQKKIEGFNFDMRKTVLSYDDVIRQQRDLIYAQRDILLQIENFDHYIQKMIIRAVDIILSYDFIILPNQEIHYKNLINFLNDNLSRITHFNFGQIGIENYPIEQLNEFLIKQLETIYFKQIQSVLKENLGKTYFESERYIILSTLDSQWQNHIDTIDKLRSSANLVQYSQKNPYQIFTEEATKKFNILVAESAYQAIVSLFNNSNAEKIEYIKAILSDGTAISYPADSPQEIIDQIIASNEERIAAARKAKEEKQPEFIEKQLAKLKIEKVESGEEFELWKIGDSKLVNLKKEMPLDEKQNILVKMQQEQLEMMSEEEKNLIQEQNLEIVEIEEIEEEIQNENPQKVEFVDFKNDPDAYNKLIFGADYADKQLISSEEEDNNEKTNINNNEDLERTKGEAQQTAKNPNE.

ATP-binding positions include Gln83, 101–105 (GEGKT), and Asp489. Positions 948 to 983 (ISSEEEDNNEKTNINNNEDLERTKGEAQQTAKNPNE) are disordered. Positions 973–983 (EAQQTAKNPNE) are enriched in polar residues.

This sequence belongs to the SecA family. As to quaternary structure, monomer and homodimer. Part of the essential Sec protein translocation apparatus which comprises SecA, SecYEG and auxiliary proteins SecDF. Other proteins may also be involved.

The protein localises to the cell membrane. It localises to the cytoplasm. It catalyses the reaction ATP + H2O + cellular proteinSide 1 = ADP + phosphate + cellular proteinSide 2.. Part of the Sec protein translocase complex. Interacts with the SecYEG preprotein conducting channel. Has a central role in coupling the hydrolysis of ATP to the transfer of proteins into and across the cell membrane, serving as an ATP-driven molecular motor driving the stepwise translocation of polypeptide chains across the membrane. This is Protein translocase subunit SecA from Mesomycoplasma hyopneumoniae (strain J / ATCC 25934 / NCTC 10110) (Mycoplasma hyopneumoniae).